Consider the following 228-residue polypeptide: 2,3-bisphosphoglycerate-dependent phosphoglycerate mutase (228 aa).

Residues 8-15, 21-22, R60, 87-90, K98, 114-115, and 180-181 each bind substrate; these read RHGQSAWN, TG, ERHY, RR, and GN. H9 acts as the Tele-phosphohistidine intermediate in catalysis. E87 functions as the Proton donor/acceptor in the catalytic mechanism.

Belongs to the phosphoglycerate mutase family. BPG-dependent PGAM subfamily. In terms of assembly, homodimer.

It carries out the reaction (2R)-2-phosphoglycerate = (2R)-3-phosphoglycerate. It functions in the pathway carbohydrate degradation; glycolysis; pyruvate from D-glyceraldehyde 3-phosphate: step 3/5. Functionally, catalyzes the interconversion of 2-phosphoglycerate and 3-phosphoglycerate. The protein is 2,3-bisphosphoglycerate-dependent phosphoglycerate mutase of Rhizorhabdus wittichii (strain DSM 6014 / CCUG 31198 / JCM 15750 / NBRC 105917 / EY 4224 / RW1) (Sphingomonas wittichii).